The primary structure comprises 275 residues: Activator of basal transcription 1 (275 aa).

An N-acetylmethionine modification is found at Met-1. Composition is skewed to acidic residues over residues 1–10 and 25–34; these read MEVEGLELDT and AEEEQEESED. The tract at residues 1–39 is disordered; it reads MEVEGLELDTAELGPLEGSHQKLEAEEEQEESEDAAGGS. The region spanning 46-145 is the RRM domain; that stretch reads GIVYLGHIPP…RRRSPFRYDL (100 aa). A coiled-coil region spans residues 164 to 194; sequence AFERQVRRQRLRAEVAQAKRETDFYLRSVER. Positions 200–275 are disordered; that stretch reads AADGDSTRPN…RGNSSPARNS (76 aa). Residues 262–275 are compositionally biased toward polar residues; that stretch reads PSESRGNSSPARNS.

This sequence belongs to the ESF2/ABP1 family. As to quaternary structure, interacts with ESF1/ABTAP. Interacts with IGHMBP2.

The protein localises to the nucleus. It localises to the nucleolus. In terms of biological role, could be a novel TATA-binding protein (TBP) which can function as a basal transcription activator. Can act as a regulator of basal transcription for class II genes. This chain is Activator of basal transcription 1 (ABT1), found in Bos taurus (Bovine).